Consider the following 872-residue polypeptide: Valine--tRNA ligase (872 aa).

A 'HIGH' region motif is present at residues 46 to 56 (PNVTGKLHIGH). The 'KMSKS' region motif lies at 523–527 (KMSKS). An ATP-binding site is contributed by K526. A coiled-coil region spans residues 796–872 (IEIANDSFIN…KDKLKELTND (77 aa)).

It belongs to the class-I aminoacyl-tRNA synthetase family. ValS type 1 subfamily. As to quaternary structure, monomer.

It localises to the cytoplasm. The catalysed reaction is tRNA(Val) + L-valine + ATP = L-valyl-tRNA(Val) + AMP + diphosphate. Functionally, catalyzes the attachment of valine to tRNA(Val). As ValRS can inadvertently accommodate and process structurally similar amino acids such as threonine, to avoid such errors, it has a 'posttransfer' editing activity that hydrolyzes mischarged Thr-tRNA(Val) in a tRNA-dependent manner. This chain is Valine--tRNA ligase, found in Mycoplasma mycoides subsp. mycoides SC (strain CCUG 32753 / NCTC 10114 / PG1).